Here is a 325-residue protein sequence, read N- to C-terminus: Forkhead box protein B1 (325 aa).

Positions 12-103 form a DNA-binding region, fork-head; it reads QKPPYSYISL…GDMFENGSFL (92 aa). Low complexity predominate over residues 284-309; sequence LSNSPPSLSPTSSQTATSQSSPATPS. A disordered region spans residues 284-325; that stretch reads LSNSPPSLSPTSSQTATSQSSPATPSETLTSPASALHSVAVH.

It localises to the nucleus. Transcription factor expressed by neural progenitor cells in specific regions of the embryonic neuroepithelium. Essential for the mammillary nuclei maintenance. Negatively regulates the proliferation of oligodendrocyte progenitors and promotes oligodendrocyte maturation. Also expressed in mammary glands, plays a role in lactation, controls development of mammary glands and the inferior colliculi of the midbrain in the central nervous system that regulates the milk-ejection reflex. The polypeptide is Forkhead box protein B1 (FOXB1) (Homo sapiens (Human)).